Here is a 420-residue protein sequence, read N- to C-terminus: Glucose-1-phosphate adenylyltransferase (420 aa).

Alpha-D-glucose 1-phosphate contacts are provided by residues Y107, G173, 188 to 189, and S206; that span reads EK.

This sequence belongs to the bacterial/plant glucose-1-phosphate adenylyltransferase family. Homotetramer.

The catalysed reaction is alpha-D-glucose 1-phosphate + ATP + H(+) = ADP-alpha-D-glucose + diphosphate. It functions in the pathway glycan biosynthesis; glycogen biosynthesis. Involved in the biosynthesis of ADP-glucose, a building block required for the elongation reactions to produce glycogen. Catalyzes the reaction between ATP and alpha-D-glucose 1-phosphate (G1P) to produce pyrophosphate and ADP-Glc. In Shewanella oneidensis (strain ATCC 700550 / JCM 31522 / CIP 106686 / LMG 19005 / NCIMB 14063 / MR-1), this protein is Glucose-1-phosphate adenylyltransferase.